Reading from the N-terminus, the 407-residue chain is TOM1-like protein 1 (407 aa).

The residue at position 2 (G2) is an N-acetylglycine. Residues 55–183 form the VHS domain; sequence ATTENLEEPD…SLKARGIRFP (129 aa). The region spanning 228–315 is the GAT domain; the sequence is FTAEQTKEAF…TLSKYEEMNK (88 aa). The disordered stretch occupies residues 315-407; it reads KPSAPLTSHE…SSKNDDLIRF (93 aa). At S337 the chain carries Phosphoserine. Residues 337–347 are compositionally biased toward basic and acidic residues; that stretch reads SPIHGREESLV. The segment covering 353–364 has biased composition (gly residues); that stretch reads VRGGFHGGGGSG. Basic and acidic residues predominate over residues 388–407; that stretch reads PDHDPKKEQSSSKNDDLIRF.

It belongs to the TOM1 family. Ubiquitously expressed.

The protein localises to the membrane. Functionally, might contribute to the loading of the ESCRT machinery. In Arabidopsis thaliana (Mouse-ear cress), this protein is TOM1-like protein 1.